Consider the following 54-residue polypeptide: Synaptosomal-associated protein 25 (54 aa).

It belongs to the SNAP-25 family. As to quaternary structure, part of the SNARE core complex containing SNAP25, VAMP2 and STX1A; this complex binds CPLX1. Found in a complex containing SYT1, SV2B and syntaxin-1. Found in a ternary complex with STX1A and VAMP8. Interacts with HSC70 and with SYT9, forming a complex with DNAJC5. The interaction with SYT9 is inhibited in presence of calcium. Isoform 1 and isoform 2 interact with BLOC1S6. Interacts with CENPF. Interacts with EQTN. Interacts with HGS. Interacts with KCNB1 (via N-terminus); reduces the voltage-dependent potassium channel KCNB1 activity in pancreatic beta cells. Interacts with OTOF. Interacts with RIMS1. Interacts with SNAPIN. Interacts with STXBP6. Interacts with TRIM9. Interacts with ZDHHC13 (via ANK repeats). Interacts with ZDHHC17 (via ANK repeats). Associates with the BLOC-1 complex. Interacts with PLCL1 (via C2 domain). Interacts with PRRT2; this interaction may impair the formation of the SNARE complex. Interacts with alpha-synuclein/SNCA. Interacts with PRPH2. Interacts with ROM1. Interacts with STX3. Post-translationally, the N-terminus is blocked.

The protein resides in the cytoplasm. Its subcellular location is the perinuclear region. It localises to the cell membrane. The protein localises to the synapse. It is found in the synaptosome. The protein resides in the photoreceptor inner segment. Its function is as follows. t-SNARE involved in the molecular regulation of neurotransmitter release. May play an important role in the synaptic function of specific neuronal systems. Associates with proteins involved in vesicle docking and membrane fusion. Regulates plasma membrane recycling through its interaction with CENPF. Modulates the gating characteristics of the delayed rectifier voltage-dependent potassium channel KCNB1 in pancreatic beta cells. The sequence is that of Synaptosomal-associated protein 25 (SNAP25) from Oryctolagus cuniculus (Rabbit).